Consider the following 82-residue polypeptide: Small ribosomal subunit protein uS17 (82 aa).

It belongs to the universal ribosomal protein uS17 family. In terms of assembly, part of the 30S ribosomal subunit.

Its function is as follows. One of the primary rRNA binding proteins, it binds specifically to the 5'-end of 16S ribosomal RNA. This Shewanella amazonensis (strain ATCC BAA-1098 / SB2B) protein is Small ribosomal subunit protein uS17.